A 718-amino-acid polypeptide reads, in one-letter code: MNYYKESYYTNRELSWLDFNYRVLDEARDKDNPLLERVRFLGITQSNLDEFFTVRVASLRKLMSVNYTKPDPAGLTAADQVSAISDKAHEMVKRQYNTLNRSLLPLLEQHAIHLLSMADLNEEQHAFVKNYFDDELYPALTPMADDSSRPFPFIGNNTLNIALRIYKNGDKKDRKFATVQVPDVFPRVVVLPGAPNQFILIEEIIKAFVGSLFINYTVKETSCYRVMRDLDLDVAEEDTSDLLKEVQKQLKMRERGKVMRLEVEKSMSKHQRTRLAKALGINESALYVINGPLNLTFLSKLVKAVQGHEDLNYPKYHAYYPAKYRERSIFDLIKDHDILMQYPYDDFKPVVDFIHEAAEDEDVLAIKMTLYRVSADSPIIKYLGQAAQNGKQVTVLVEVKARFDEENNVHWAKKLEEMGCHVIYGLIGLKTHCKLALVVRRENEGIKRYMHMGTGNYNDVTAHFYTDMGLFTADTDMGIDASNIFNMLSGYSEPPYFHKLHISPDGIRDFINEKLDDEIAIAKAGQPAVVKMKMNSLSDPQIISKLYEASHAGVKIQLIIRGICCLRTGIKGISDNIEVHSIIGRLLEHSRIYYFSNDGEPQIYLSSADMMTRNLNRRVELLFPLLQPEISHRAMTIFETMWADTVKTRILQPDNTYARVDGRGLEVLDSQAEFIREAEQAVKADHGDTTPTSNAHQFIPMMSPKNEPDASDLDREDD.

Position 47 (Asn47) interacts with ATP. Mg(2+) contacts are provided by Arg372 and Arg402. The active-site Phosphohistidine intermediate is His432. Residues Tyr465, Arg561, and His589 each contribute to the ATP site. The tract at residues Lys683–Asp718 is disordered. Residues Asp709–Asp718 show a composition bias toward acidic residues.

This sequence belongs to the polyphosphate kinase 1 (PPK1) family. It depends on Mg(2+) as a cofactor. An intermediate of this reaction is the autophosphorylated ppk in which a phosphate is covalently linked to a histidine residue through a N-P bond.

The enzyme catalyses [phosphate](n) + ATP = [phosphate](n+1) + ADP. Its function is as follows. Catalyzes the reversible transfer of the terminal phosphate of ATP to form a long-chain polyphosphate (polyP). The polypeptide is Polyphosphate kinase (Lactiplantibacillus plantarum (strain ATCC BAA-793 / NCIMB 8826 / WCFS1) (Lactobacillus plantarum)).